A 167-amino-acid chain; its full sequence is Leptin (167 aa).

Residues 1 to 21 (MCWRPLCRFLWLWSYLSYVQA) form the signal peptide. C117 and C167 form a disulfide bridge.

Belongs to the leptin family.

It is found in the secreted. Key player in the regulation of energy balance and body weight control. Once released into the circulation, has central and peripheral effects by binding LEPR, found in many tissues, which results in the activation of several major signaling pathways. In the hypothalamus, acts as an appetite-regulating factor that induces a decrease in food intake and an increase in energy consumption by inducing anorexinogenic factors and suppressing orexigenic neuropeptides, also regulates bone mass and secretion of hypothalamo-pituitary-adrenal hormones. In the periphery, increases basal metabolism, influences reproductive function, regulates pancreatic beta-cell function and insulin secretion, is pro-angiogenic for endothelial cell and affects innate and adaptive immunity. In the arcuate nucleus of the hypothalamus, activates by depolarization POMC neurons inducing FOS and SOCS3 expression to release anorexigenic peptides and inhibits by hyperpolarization NPY neurons inducing SOCS3 with a consequent reduction on release of orexigenic peptides. In addition to its known satiety inducing effect, has a modulatory role in nutrient absorption. In the intestine, reduces glucose absorption by enterocytes by activating PKC and leading to a sequential activation of p38, PI3K and ERK signaling pathways which exerts an inhibitory effect on glucose absorption. Acts as a growth factor on certain tissues, through the activation of different signaling pathways increases expression of genes involved in cell cycle regulation such as CCND1, via JAK2-STAT3 pathway, or VEGFA, via MAPK1/3 and PI3K-AKT1 pathways. May also play an apoptotic role via JAK2-STAT3 pathway and up-regulation of BIRC5 expression. Pro-angiogenic, has mitogenic activity on vascular endothelial cells and plays a role in matrix remodeling by regulating the expression of matrix metalloproteinases (MMPs) and tissue inhibitors of metalloproteinases (TIMPs). In innate immunity, modulates the activity and function of neutrophils by increasing chemotaxis and the secretion of oxygen radicals. Increases phagocytosis by macrophages and enhances secretion of pro-inflammatory mediators. Increases cytotoxic ability of NK cells. Plays a pro-inflammatory role, in synergy with IL1B, by inducing NOS2 which promotes the production of IL6, IL8 and Prostaglandin E2, through a signaling pathway that involves JAK2, PI3K, MAP2K1/MEK1 and MAPK14/p38. In adaptive immunity, promotes the switch of memory T-cells towards T helper-1 cell immune responses. Increases CD4(+)CD25(-) T cells proliferation and reduces autophagy during TCR (T cell receptor) stimulation, through MTOR signaling pathway activation and BCL2 up-regulation. The sequence is that of Leptin (Lep) from Mus musculus (Mouse).